Reading from the N-terminus, the 1007-residue chain is Calmodulin-binding transcription activator 1 (1007 aa).

The segment at residues 18 to 144 (MEQLLSEAQH…YLEVKGNRTS (127 aa)) is a DNA-binding region (CG-1). Residues 148 to 164 (KENNSNSVNGTASVNID) are compositionally biased toward polar residues. The tract at residues 148–227 (KENNSNSVNG…VHGNRVRESD (80 aa)) is disordered. A compositionally biased stretch (low complexity) spans 165-176 (STASPTSTLSSL). Positions 183-202 (GDSQQASSVLRPSPEPQTGN) are enriched in polar residues. The segment at 233–398 (DVRALDTVGN…TVECETAAAG (166 aa)) is transcription activation. ANK repeat units lie at residues 612–641 (DGQG…NINF) and 645–674 (NGWS…DAGA). 2 consecutive IQ domains span residues 821 to 850 (LSCA…RIVK) and 844 to 873 (IRQR…SVGL). The interval 869–891 (WSVGLLEKIILRWRRKGNGLRGF) is calmodulin-binding. Positions 915–943 (QEDEYDYLKEGRKQTEERLQKALTRVKSM) form a coiled coil. Serine 942 bears the Phosphoserine mark.

The protein belongs to the CAMTA family. As to expression, expressed in roots, stems, leaves, pollen and siliques.

The protein resides in the nucleus. Transcription activator that binds calmodulin in a calcium-dependent manner in vitro. Binds to the DNA consensus sequence 5'-[ACG]CGCG[GTC]-3'. Regulates transcriptional activity in response to calcium signals. Involved in freezing tolerance. Involved in freezing tolerance in association with CAMTA2 and CAMTA3. Contributes together with CAMTA2 and CAMTA3 to the positive regulation of the cold-induced expression of DREB1A/CBF3, DREB1B/CBF1 and DREB1C/CBF2. Involved in drought stress responses by regulating several drought-responsive genes. Involved in auxin signaling and responses to abiotic stresses. Activates the expression of the V-PPase proton pump AVP1 in pollen. This Arabidopsis thaliana (Mouse-ear cress) protein is Calmodulin-binding transcription activator 1.